The chain runs to 384 residues: N-acetyldiaminopimelate deacetylase (384 aa).

Aspartate 75 is an active-site residue. Glutamate 134 serves as the catalytic Proton acceptor.

This sequence belongs to the peptidase M20A family. N-acetyldiaminopimelate deacetylase subfamily.

It carries out the reaction N-acetyl-(2S,6S)-2,6-diaminopimelate + H2O = (2S,6S)-2,6-diaminopimelate + acetate. It functions in the pathway amino-acid biosynthesis; L-lysine biosynthesis via DAP pathway; LL-2,6-diaminopimelate from (S)-tetrahydrodipicolinate (acetylase route): step 3/3. In terms of biological role, catalyzes the conversion of N-acetyl-diaminopimelate to diaminopimelate and acetate. The polypeptide is N-acetyldiaminopimelate deacetylase (Lactobacillus helveticus (strain DPC 4571)).